Reading from the N-terminus, the 290-residue chain is ATP synthase gamma chain (290 aa).

Belongs to the ATPase gamma chain family. As to quaternary structure, F-type ATPases have 2 components, CF(1) - the catalytic core - and CF(0) - the membrane proton channel. CF(1) has five subunits: alpha(3), beta(3), gamma(1), delta(1), epsilon(1). CF(0) has three main subunits: a, b and c.

It localises to the cell membrane. Produces ATP from ADP in the presence of a proton gradient across the membrane. The gamma chain is believed to be important in regulating ATPase activity and the flow of protons through the CF(0) complex. The sequence is that of ATP synthase gamma chain from Listeria innocua serovar 6a (strain ATCC BAA-680 / CLIP 11262).